The sequence spans 483 residues: Probable cytosol aminopeptidase (483 aa).

Mn(2+) contacts are provided by Lys244 and Asp249. The active site involves Lys256. Residues Asp267, Asp326, and Glu328 each coordinate Mn(2+). Arg330 is an active-site residue.

It belongs to the peptidase M17 family. It depends on Mn(2+) as a cofactor.

Its subcellular location is the cytoplasm. The catalysed reaction is Release of an N-terminal amino acid, Xaa-|-Yaa-, in which Xaa is preferably Leu, but may be other amino acids including Pro although not Arg or Lys, and Yaa may be Pro. Amino acid amides and methyl esters are also readily hydrolyzed, but rates on arylamides are exceedingly low.. It carries out the reaction Release of an N-terminal amino acid, preferentially leucine, but not glutamic or aspartic acids.. In terms of biological role, presumably involved in the processing and regular turnover of intracellular proteins. Catalyzes the removal of unsubstituted N-terminal amino acids from various peptides. This is Probable cytosol aminopeptidase from Campylobacter jejuni subsp. jejuni serotype O:2 (strain ATCC 700819 / NCTC 11168).